Reading from the N-terminus, the 109-residue chain is C-X-C motif chemokine 13 (109 aa).

The N-terminal stretch at 1–22 is a signal peptide; it reads MKFISTSLLLMLLVSSLSPVQG. Intrachain disulfides connect Cys33–Cys60 and Cys35–Cys76.

The protein belongs to the intercrine alpha (chemokine CxC) family. Highest levels in liver, followed by spleen, lymph node, appendix and stomach. Low levels in salivary gland, mammary gland and fetal spleen.

It is found in the secreted. Functionally, chemotactic for B-lymphocytes but not for T-lymphocytes, monocytes and neutrophils. Does not induce calcium release in B-lymphocytes. Binds to BLR1/CXCR5. This Homo sapiens (Human) protein is C-X-C motif chemokine 13 (CXCL13).